Here is a 158-residue protein sequence, read N- to C-terminus: SsrA-binding protein (158 aa).

The interval 132–158 (KKTHDKRETEKKRDWNREKARLMRDKG) is disordered. Residues 136-158 (DKRETEKKRDWNREKARLMRDKG) are compositionally biased toward basic and acidic residues.

It belongs to the SmpB family.

The protein resides in the cytoplasm. Required for rescue of stalled ribosomes mediated by trans-translation. Binds to transfer-messenger RNA (tmRNA), required for stable association of tmRNA with ribosomes. tmRNA and SmpB together mimic tRNA shape, replacing the anticodon stem-loop with SmpB. tmRNA is encoded by the ssrA gene; the 2 termini fold to resemble tRNA(Ala) and it encodes a 'tag peptide', a short internal open reading frame. During trans-translation Ala-aminoacylated tmRNA acts like a tRNA, entering the A-site of stalled ribosomes, displacing the stalled mRNA. The ribosome then switches to translate the ORF on the tmRNA; the nascent peptide is terminated with the 'tag peptide' encoded by the tmRNA and targeted for degradation. The ribosome is freed to recommence translation, which seems to be the essential function of trans-translation. In Brucella anthropi (strain ATCC 49188 / DSM 6882 / CCUG 24695 / JCM 21032 / LMG 3331 / NBRC 15819 / NCTC 12168 / Alc 37) (Ochrobactrum anthropi), this protein is SsrA-binding protein.